A 256-amino-acid polypeptide reads, in one-letter code: Metallo-beta-lactamase type 2 (256 aa).

The first 29 residues, 1–29 (MKNTLLKLGVCVSLLGITPFVSTISSVQA), serve as a signal peptide directing secretion. Zn(2+) is bound by residues H115, H117, D119, H178, and C197. Positions 200 and 209 each coordinate substrate. H239 contacts Zn(2+).

This sequence belongs to the metallo-beta-lactamase superfamily. Class-B beta-lactamase family. Monomer. The cofactor is Zn(2+).

It is found in the periplasm. The enzyme catalyses a beta-lactam + H2O = a substituted beta-amino acid. Inhibited by chelating agents such as EDTA. Functionally, confers resistance to the different beta-lactams antibiotics (penicillin, cephalosporin and carbapenem) via the hydrolysis of the beta-lactam ring. Benzylpenicillin is a better substrate than cephalosporin C and ampicillin. This chain is Metallo-beta-lactamase type 2, found in Bacillus cereus.